A 215-amino-acid polypeptide reads, in one-letter code: Coat protein (215 aa).

The segment at 1–34 is disordered; that stretch reads MATQNADVTDATDYKKPPAETEQKALTIQPRSNK. The segment covering 12–23 has biased composition (basic and acidic residues); sequence TDYKKPPAETEQ. Over residues 24-34 the composition is skewed to polar residues; sequence KALTIQPRSNK.

The protein belongs to the potexvirus capsid protein family.

It localises to the virion. Required for genome encapsidation. Forms ribonucleoprotein complexes along with TGB1 helicase and viral RNA. This is Coat protein from Setaria italica (Foxtail millet).